A 719-amino-acid chain; its full sequence is NF-kappa-B inhibitor zeta (719 aa).

Low complexity predominate over residues 46–81; the sequence is GACDGGCSASGPSAPGSPGSDSSDFSSASSVSSCGA. The segment at 46 to 97 is disordered; sequence GACDGGCSASGPSAPGSPGSDSSDFSSASSVSSCGAVESRPRGGARAERLQV. Residues 84–97 are compositionally biased toward basic and acidic residues; it reads SRPRGGARAERLQV. Residues 108–130 form the OCA domain; that stretch reads RGPFQGVRVKNSVKELLLHIRSH. A Nuclear localization signal motif is present at residues 164–179; the sequence is KRKGSDSLSDGPACKR. 2 disordered regions span residues 188–210 and 289–343; these read LTPP…ESKQ and YSPQ…FAPL. Residues 201 to 210 are compositionally biased toward basic and acidic residues; it reads EDVHHNESKQ. The tract at residues 322 to 394 is required for transcriptional activity; sequence SYEPHLFGRE…LARPDASSTP (73 aa). Residues 405 to 719 form an interaction with NFKB1/p50 region; the sequence is GGNPMSTTQL…KSIQQRAPPY (315 aa). ANK repeat units follow at residues 444-473, 480-509, 513-542, 552-581, 583-608, 613-642, and 649-682; these read DGDT…ALHM, NGQS…QVNT, WGRT…GSNQ, DGLT…HSPE, QELL…AVEA, SGRT…CLSF, and NGNT…DPST.

In terms of assembly, interacts with NFKB1/p50. Interacts with RELA. Interacts with AKIRIN2.

It is found in the nucleus. Involved in regulation of NF-kappa-B transcription factor complexes. Inhibits NF-kappa-B activity without affecting its nuclear translocation upon stimulation. Inhibits DNA-binding of RELA and NFKB1/p50, and of the NF-kappa-B p65-p50 heterodimer and the NF-kappa-B p50-p50 homodimer. Also seems to activate NF-kappa-B-mediated transcription. In vitro, upon association with NFKB1/p50 has transcriptional activation activity and, together with NFKB1/p50 and RELA, is recruited to LCN2 promoters. Promotes transcription of LCN2 and DEFB4. Is recruited to IL-6 promoters and activates IL-6 but decreases TNF-alpha production in response to LPS. Seems to be involved in the induction of inflammatory genes activated through TLR/IL-1 receptor signaling. Involved in the induction of T helper 17 cells (Th17) differentiation upon recognition of antigen by T cell antigen receptor (TCR). In Bos taurus (Bovine), this protein is NF-kappa-B inhibitor zeta (NFKBIZ).